Consider the following 240-residue polypeptide: Probable ATP synthase 24 kDa subunit, mitochondrial (240 aa).

A mitochondrion-targeting transit peptide spans 1–32 (MAYASRFLSRSKQLQGGLVILQQQHAIPVRAF). Composition is skewed to basic and acidic residues over residues 210 to 222 (AVEA…KKEE) and 229 to 240 (PDVKSLDIRNFI). The tract at residues 210–240 (AVEAMESQKKKEEFQDEEMPDVKSLDIRNFI) is disordered.

The protein resides in the mitochondrion. It localises to the mitochondrion inner membrane. In terms of biological role, mitochondrial membrane ATP synthase (F(1)F(0) ATP synthase or Complex V) produces ATP from ADP in the presence of a proton gradient across the membrane which is generated by electron transport complexes of the respiratory chain. F-type ATPases consist of two structural domains, F(1) - containing the extramembraneous catalytic core and F(0) - containing the membrane proton channel, linked together by a central stalk and a peripheral stalk. During catalysis, ATP synthesis in the catalytic domain of F(1) is coupled via a rotary mechanism of the central stalk subunits to proton translocation. Part of the complex F(0) domain. The polypeptide is Probable ATP synthase 24 kDa subunit, mitochondrial (Arabidopsis thaliana (Mouse-ear cress)).